Here is a 295-residue protein sequence, read N- to C-terminus: Probable intramembrane protease C25B8.17 (295 aa).

Residues M1–S21 form a helical membrane-spanning segment. Residues A22–K35 lie on the Cytoplasmic side of the membrane. The helical transmembrane segment at R36–L56 threads the bilayer. Residues R57–Y63 lie on the Lumenal side of the membrane. Residues I64–F84 form a helical membrane-spanning segment. Topologically, residues N85–T89 are cytoplasmic. Residues F90–Y106 traverse the membrane as a helical segment. The Lumenal segment spans residues F107 to H111. The chain crosses the membrane as a helical span at residues W112–M130. The Cytoplasmic portion of the chain corresponds to R131–A139. Residues L140–V160 form a helical membrane-spanning segment. Residue D149 is part of the active site. Topologically, residues T161–L183 are lumenal. A helical transmembrane segment spans residues S184–F204. The active site involves D190. Topologically, residues D205–T221 are cytoplasmic. Residues Y222–F244 form a helical membrane-spanning segment. The Lumenal portion of the chain corresponds to K245–P249. The PAL signature appears at P249 to L251. The chain crosses the membrane as a helical span at residues A250–Y268. Residues R269 to T295 lie on the Cytoplasmic side of the membrane.

This sequence belongs to the peptidase A22B family.

It localises to the endoplasmic reticulum membrane. Its subcellular location is the golgi apparatus membrane. This chain is Probable intramembrane protease C25B8.17, found in Schizosaccharomyces pombe (strain 972 / ATCC 24843) (Fission yeast).